We begin with the raw amino-acid sequence, 204 residues long: GATA transcription factor 14 (204 aa).

The segment covering 57–66 (REFDTNDSKP) has biased composition (basic and acidic residues). The segment at 57–102 (REFDTNDSKPSRNFSNLPTATRGRLHAPKRSGNKRGRQKRLSFKSP) is disordered. The span at 79–98 (GRLHAPKRSGNKRGRQKRLS) shows a compositional bias: basic residues. The GATA-type zinc finger occupies 111–165 (GITDKSCSHCGTRKTPLWREGPRGAGTLCNACGMRYRTGRLLPEYRPASSPDFKP). The interval 180–204 (RERKSSPPNSFGFSESYHSTRKLGF) is disordered. Polar residues predominate over residues 185-196 (SPPNSFGFSESY).

Belongs to the type IV zinc-finger family. Class A subfamily.

It is found in the nucleus. In terms of biological role, transcriptional activator that specifically binds 5'-GATA-3' or 5'-GAT-3' motifs within gene promoters. May be involved in the regulation of some light-responsive genes. The sequence is that of GATA transcription factor 14 (GATA14) from Arabidopsis thaliana (Mouse-ear cress).